A 422-amino-acid chain; its full sequence is Probable sucrose-phosphatase 2 (422 aa).

The protein belongs to the sucrose phosphatase family. In terms of assembly, homodimer. Mg(2+) serves as cofactor.

It carries out the reaction sucrose 6(F)-phosphate + H2O = sucrose + phosphate. It participates in glycan biosynthesis; sucrose biosynthesis; sucrose from D-fructose 6-phosphate and UDP-alpha-D-glucose: step 2/2. Catalyzes the final step of sucrose synthesis. This is Probable sucrose-phosphatase 2 (SPP2) from Arabidopsis thaliana (Mouse-ear cress).